The following is a 608-amino-acid chain: Protein FAM151A (608 aa).

A helical transmembrane segment spans residues 14-34 (WILAGSVSMTLVLAISMILGL). The segment at 588-608 (RHRPSSRTGPSYVEGFPGESR) is disordered.

The protein belongs to the menorin family.

It is found in the membrane. This chain is Protein FAM151A (Fam151a), found in Rattus norvegicus (Rat).